The primary structure comprises 379 residues: Alternative oxidase 1, mitochondrial (379 aa).

The segment covering 33–50 has biased composition (low complexity); sequence TTTTSTKSRSSTSTAATT. The interval 33–76 is disordered; the sequence is TTTTSTKSRSSTSTAATTVGNSNPKSPIDEDNLEKPGTIPTKHK. Fe cation-binding residues include Glu180, Glu219, and His222. The helical transmembrane segment at 234 to 256 threads the bilayer; the sequence is WFTRSIIYIGQGVFTNIFFLVYL. Fe cation contacts are provided by Glu270, Glu271, Glu326, and His329.

Belongs to the alternative oxidase family. It depends on Fe cation as a cofactor.

It is found in the mitochondrion inner membrane. In terms of biological role, catalyzes cyanide-resistant oxygen consumption. May increase respiration when the cytochrome respiratory pathway is restricted, or in response to low temperatures. This Candida albicans (Yeast) protein is Alternative oxidase 1, mitochondrial (AOX1).